The following is a 78-amino-acid chain: Acyl carrier protein (78 aa).

The 76-residue stretch at 2-77 (STIEERVKKI…AAIDYILSHQ (76 aa)) folds into the Carrier domain. Serine 37 is modified (O-(pantetheine 4'-phosphoryl)serine).

The protein belongs to the acyl carrier protein (ACP) family. Post-translationally, 4'-phosphopantetheine is transferred from CoA to a specific serine of apo-ACP by AcpS. This modification is essential for activity because fatty acids are bound in thioester linkage to the sulfhydryl of the prosthetic group.

It is found in the cytoplasm. The protein operates within lipid metabolism; fatty acid biosynthesis. Functionally, carrier of the growing fatty acid chain in fatty acid biosynthesis. In Tolumonas auensis (strain DSM 9187 / NBRC 110442 / TA 4), this protein is Acyl carrier protein.